Here is a 144-residue protein sequence, read N- to C-terminus: Transcriptional regulator MraZ (144 aa).

SpoVT-AbrB domains are found at residues 5-47 and 76-121; these read EYQY…PLDR and AHKT…SQER.

It belongs to the MraZ family. As to quaternary structure, forms oligomers.

Its subcellular location is the cytoplasm. The protein localises to the nucleoid. This Thermus thermophilus (strain ATCC BAA-163 / DSM 7039 / HB27) protein is Transcriptional regulator MraZ.